The sequence spans 41 residues: Divisome-associated membrane protein Blr (41 aa).

The Cytoplasmic segment spans residues 1-3 (MNR). The helical transmembrane segment at 4–24 (LIELTGWIVLVVSVILLGVAS) threads the bilayer. At 25–41 (HIDNYQPPEQSASVQHK) the chain is on the periplasmic side.

In terms of assembly, interacts with FtsL and several other divisomal proteins, including FtsI, FtsK, FtsN, FtsQ, FtsW and YmgF. In terms of processing, the N-terminus is blocked.

The protein resides in the cell inner membrane. Component of the cell division machinery, which is probably involved in the stabilization of the divisome under certain stress conditions. This is Divisome-associated membrane protein Blr (blr) from Escherichia coli (strain K12).